Here is a 299-residue protein sequence, read N- to C-terminus: Tyrosine recombinase XerC (299 aa).

Positions 1–85 constitute a Core-binding (CB) domain; sequence MERQLDAYCE…AVRGLYHYLN (85 aa). In terms of domain architecture, Tyr recombinase spans 106–285; that stretch reads RLPKTLDTDR…DFQHLATVYD (180 aa). Catalysis depends on residues arginine 146, lysine 170, histidine 237, arginine 240, and histidine 263. The active-site O-(3'-phospho-DNA)-tyrosine intermediate is tyrosine 272.

It belongs to the 'phage' integrase family. XerC subfamily. Forms a cyclic heterotetrameric complex composed of two molecules of XerC and two molecules of XerD.

The protein localises to the cytoplasm. Site-specific tyrosine recombinase, which acts by catalyzing the cutting and rejoining of the recombining DNA molecules. The XerC-XerD complex is essential to convert dimers of the bacterial chromosome into monomers to permit their segregation at cell division. It also contributes to the segregational stability of plasmids. The protein is Tyrosine recombinase XerC of Pseudomonas fluorescens.